Here is an 824-residue protein sequence, read N- to C-terminus: MGSSTGDLVTRIQSAHRFDHDALFRFAADNVSGFPTNPSQFKVSQFGHGQSNPTFLIEVGSGSSLKRYVLRKKPPGKLLQSAHAVDREFQVLRALGEHTQVPVPKVFCLCTDPAVIGTAFYIMEFMEGRIFIDPKLPNVAPERRNAIYRATAKALASLHSADVDAIGLEKYGRRGNYCKRQIDRWFKQYLASTSEGKPERNPKMFELVDWLRKNIPAEDSTGATSGLVHGDFRIDNLVFHPSEDRVIGIIDWELSTLGNQMCDVAYSCMHYIVNVQLDKEHVSEGFETTGLPEGMLSMPEFLLEYCSASGKPWPAANWKFYVAFSLFRAASIYTGVYSRWLMGNASAGERARNTGVQANELVESALGYIARENVLPEHPPSVQRDVSPSYESLVDGSGRFIPNRKVLELRQKLIKFMETHIYPMENEFSKLAQSDMRWTVHPQEEKLKEMAKREGLWNLFVPVDSAARARRELAATENKHNLSGKSFDQLFGEGLTNLEYGYLCEIMGRSVWAPQVFNCGAPDTGNMEVILRYGNKEQISEWLIPLLEGRIRSGFAMTEPQVASSDATNIECSIRRQGDSYVINGTKWWTSGAMDPRCRVLILMGKTDFNAPKHKQQSMILVDMRTPGISVKRPLTVFGFDDAPHGHAEISFENVVVPAKNILLGEGRGFEIAQGRLGPGRLHHCMRLIGAAERGMELMAQRALSRKTFGKFIAQHGSFVSDLAKLRVELEGTRLLVLEAADHLDKFGNKKARGILAMAKVAAPNMALKVLDTAIQVHGAAGVSSDTVLAHLWATARTLRIADGPDEVHLGTIGKLELQRASKL.

Glycine 2 is subject to N-acetylglycine. Residues 555–565 (FAMTEPQVASS), 589–591 (WTS), arginine 706, glutamine 776, and 776–780 (QVHGA) contribute to the FAD site. The Microbody targeting signal signature appears at 822–824 (SKL).

The protein belongs to the acyl-CoA dehydrogenase family. The cofactor is FAD.

It localises to the peroxisome. It catalyses the reaction a 2,3-saturated acyl-CoA + A = a 2,3-dehydroacyl-CoA + AH2. Functionally, involved with IBR1 and IBR10 in the peroxisomal beta-oxidation of indole-3-butyric acid (IBA) to form indole-3-acetic acid (IAA), a biologically active auxin. May be responsible for catalyzing the first step in IBA-CoA beta-oxidation. May play a role in defense response to pathogenic bacteria. The chain is Probable acyl-CoA dehydrogenase IBR3 from Arabidopsis thaliana (Mouse-ear cress).